A 201-amino-acid polypeptide reads, in one-letter code: UPF0301 protein ROP_34500 (201 aa).

Belongs to the UPF0301 (AlgH) family.

This Rhodococcus opacus (strain B4) protein is UPF0301 protein ROP_34500.